We begin with the raw amino-acid sequence, 100 residues long: MYLTTKEKEKLMISVVAEIARKRQARGLKLNYPEAVAIITDAILEGARDGKLVKDLMSYGRTILKREDVMEGVPEMIEMVQVEATFLDGTKLVTVHNPIQ.

The protein belongs to the urease gamma subunit family. As to quaternary structure, heterotrimer of UreA (gamma), UreB (beta) and UreC (alpha) subunits. Three heterotrimers associate to form the active enzyme.

It localises to the cytoplasm. It carries out the reaction urea + 2 H2O + H(+) = hydrogencarbonate + 2 NH4(+). It functions in the pathway nitrogen metabolism; urea degradation; CO(2) and NH(3) from urea (urease route): step 1/1. The sequence is that of Urease subunit gamma from Clostridium perfringens.